A 239-amino-acid polypeptide reads, in one-letter code: Thymidylate kinase (239 aa).

10–17 is an ATP binding site; sequence GVNRVGKS.

Belongs to the thymidylate kinase family.

It catalyses the reaction dTMP + ATP = dTDP + ADP. It participates in pyrimidine metabolism; dTTP biosynthesis. In terms of biological role, catalyzes the conversion of dTMP to dTDP. This African swine fever virus (isolate Tick/South Africa/Pretoriuskop Pr4/1996) (ASFV) protein is Thymidylate kinase (TMK).